The primary structure comprises 311 residues: Olfactory receptor 10G7 (311 aa).

Residues 1 to 23 lie on the Extracellular side of the membrane; that stretch reads MSNATLLTAFILTGLPHAPGLDA. The N-linked (GlcNAc...) asparagine glycan is linked to Asn3. The chain crosses the membrane as a helical span at residues 24–44; that stretch reads PLFGIFLVVYVLTVLGNLLIL. The Cytoplasmic segment spans residues 45 to 52; it reads LVIRVDSH. A helical transmembrane segment spans residues 53 to 73; it reads LHTPMYYFLTNLSFIDMWFST. Over 74–98 the chain is Extracellular; it reads VTVPKMLMTLVSPSGRTISFHSCVA. Cys96 and Cys188 are oxidised to a cystine. Residues 99–119 form a helical membrane-spanning segment; it reads QLYFFHFLGSTECFLYTVMSY. Residues 120-138 are Cytoplasmic-facing; it reads DRYLAISYPLRYTNMMTGR. The chain crosses the membrane as a helical span at residues 139–159; that stretch reads SCALLATGTWLSGSLHSAVQT. At 160–196 the chain is on the extracellular side; sequence ILTFHLPYCGPNQIQHYFCDAPPILKLACADTSANEM. A helical transmembrane segment spans residues 197-216; the sequence is VIFVNIGLVASGCFVLIVLS. At 217–236 the chain is on the cytoplasmic side; that stretch reads YVSIVCSILRIRTSEGRHRA. A helical transmembrane segment spans residues 237-257; the sequence is FQTCASHCIVVLCFFGPGLFI. The Extracellular segment spans residues 258–268; sequence YLRPGSRDALH. A helical membrane pass occupies residues 269–289; the sequence is GVVAVFYTTLTPLFNPVVYTL. The Cytoplasmic portion of the chain corresponds to 290 to 311; the sequence is RNKEVKKALLKLKNGSVFAQGE.

The protein belongs to the G-protein coupled receptor 1 family.

The protein resides in the cell membrane. Odorant receptor. The polypeptide is Olfactory receptor 10G7 (OR10G7) (Homo sapiens (Human)).